A 150-amino-acid polypeptide reads, in one-letter code: Macrodomain Ter protein (150 aa).

Belongs to the MatP family. Homodimer.

It localises to the cytoplasm. Required for spatial organization of the terminus region of the chromosome (Ter macrodomain) during the cell cycle. Prevents early segregation of duplicated Ter macrodomains during cell division. Binds specifically to matS, which is a 13 bp signature motif repeated within the Ter macrodomain. This chain is Macrodomain Ter protein, found in Escherichia coli O8 (strain IAI1).